A 459-amino-acid polypeptide reads, in one-letter code: tRNA modification GTPase MnmE (459 aa).

The (6S)-5-formyl-5,6,7,8-tetrahydrofolate site is built by Arg21, Glu84, and Arg123. In terms of domain architecture, TrmE-type G spans 219–378; the sequence is GVTVALAGAV…LLVLLYNFVL (160 aa). GTP is bound by residues 229–234, 248–254, and 273–276; these read NAGKSS, TEHPGTT, and DTAG. Residues Ser233 and Thr254 each contribute to the Mg(2+) site. A (6S)-5-formyl-5,6,7,8-tetrahydrofolate-binding site is contributed by Lys459.

The protein belongs to the TRAFAC class TrmE-Era-EngA-EngB-Septin-like GTPase superfamily. TrmE GTPase family. As to quaternary structure, homodimer. Heterotetramer of two MnmE and two MnmG subunits. Requires K(+) as cofactor.

Its subcellular location is the cytoplasm. Functionally, exhibits a very high intrinsic GTPase hydrolysis rate. Involved in the addition of a carboxymethylaminomethyl (cmnm) group at the wobble position (U34) of certain tRNAs, forming tRNA-cmnm(5)s(2)U34. The sequence is that of tRNA modification GTPase MnmE from Lawsonia intracellularis (strain PHE/MN1-00).